We begin with the raw amino-acid sequence, 296 residues long: DNA primase small subunit PriS (296 aa).

Residues Asp82, Asp84, and Asp191 contribute to the active site.

This sequence belongs to the eukaryotic-type primase small subunit family. In terms of assembly, heterodimer of a small subunit (PriS) and a large subunit (PriL). Mg(2+) serves as cofactor. It depends on Mn(2+) as a cofactor.

Its function is as follows. Catalytic subunit of DNA primase, an RNA polymerase that catalyzes the synthesis of short RNA molecules used as primers for DNA polymerase during DNA replication. The small subunit contains the primase catalytic core and has DNA synthesis activity on its own. Binding to the large subunit stabilizes and modulates the activity, increasing the rate of DNA synthesis while decreasing the length of the DNA fragments, and conferring RNA synthesis capability. The DNA polymerase activity may enable DNA primase to also catalyze primer extension after primer synthesis. May also play a role in DNA repair. This Methanopyrus kandleri (strain AV19 / DSM 6324 / JCM 9639 / NBRC 100938) protein is DNA primase small subunit PriS.